A 546-amino-acid polypeptide reads, in one-letter code: Chaperonin GroEL (546 aa).

ATP is bound by residues 30 to 33, K51, 87 to 91, G415, 479 to 481, and D495; these read TLGP, DGTTT, and NAA. Residues 527–546 form a disordered region; the sequence is DESAAPAMPGGMGGMGDMGM. Over residues 536 to 546 the composition is skewed to gly residues; it reads GGMGGMGDMGM.

The protein belongs to the chaperonin (HSP60) family. Forms a cylinder of 14 subunits composed of two heptameric rings stacked back-to-back. Interacts with the co-chaperonin GroES.

Its subcellular location is the cytoplasm. The catalysed reaction is ATP + H2O + a folded polypeptide = ADP + phosphate + an unfolded polypeptide.. Its function is as follows. Together with its co-chaperonin GroES, plays an essential role in assisting protein folding. The GroEL-GroES system forms a nano-cage that allows encapsulation of the non-native substrate proteins and provides a physical environment optimized to promote and accelerate protein folding. The polypeptide is Chaperonin GroEL (Acidovorax ebreus (strain TPSY) (Diaphorobacter sp. (strain TPSY))).